The sequence spans 231 residues: Enolase-phosphatase E1 (231 aa).

It belongs to the HAD-like hydrolase superfamily. MasA/MtnC family. Monomer. Mg(2+) is required as a cofactor.

The catalysed reaction is 5-methylsulfanyl-2,3-dioxopentyl phosphate + H2O = 1,2-dihydroxy-5-(methylsulfanyl)pent-1-en-3-one + phosphate. It functions in the pathway amino-acid biosynthesis; L-methionine biosynthesis via salvage pathway; L-methionine from S-methyl-5-thio-alpha-D-ribose 1-phosphate: step 3/6. The protein operates within amino-acid biosynthesis; L-methionine biosynthesis via salvage pathway; L-methionine from S-methyl-5-thio-alpha-D-ribose 1-phosphate: step 4/6. Bifunctional enzyme that catalyzes the enolization of 2,3-diketo-5-methylthiopentyl-1-phosphate (DK-MTP-1-P) into the intermediate 2-hydroxy-3-keto-5-methylthiopentenyl-1-phosphate (HK-MTPenyl-1-P), which is then dephosphorylated to form the acireductone 1,2-dihydroxy-3-keto-5-methylthiopentene (DHK-MTPene). The polypeptide is Enolase-phosphatase E1 (Stenotrophomonas maltophilia (strain R551-3)).